The following is a 563-amino-acid chain: MNTKELIAAEIAKVVPELEQENIQNLLEIPKNADMGDLAFPAFSLAKVLRKAPQMIAADIAEKIDASNFEKVEAVGPYINIFLDKSKISADVLGQVIAQGSHYADQNIGNGRNIAFDMSSPNIAKPFSIGHLRSTVIADALANIVAKQGYKPVRINHLGDWGKQFGMLIVAYKKWGSEEAVKANPINELLQLYVRINAEAEEDPSVDEEAREWFRKLEAGDEEATALWQWFRDESLVEFNRLYDELGVSFDSYNGEAFYNDKMDEVVDILTKKGLLQESQGAQVVNLEKYGIEHPALIKKSDGATLYITRDLAAALYRKRTYDFAKAIYVVGNEQSAHFKQLKAVLKEMGYNWSDDMTHVAFGLVTKNGKKLSTRKGNVILLEPTIAEAVNRAQAQIEAKNPNLPNKEAIAHAVGVGAIKFYDLKTDRMNGYDFDLDAMVSFEGETGPYVQYAHARIQSILRKADFTPSADATYSLNDVESWEIIKLLQDFPRIINRASDNFEPSIVAKFAISLAQAFNKYYAHTRILDESPERDSRLALCYATATVLKEALRLLGVEAPDEM.

The 'HIGH' region signature appears at 121–131 (PNIAKPFSIGH).

The protein belongs to the class-I aminoacyl-tRNA synthetase family. As to quaternary structure, monomer.

It is found in the cytoplasm. The enzyme catalyses tRNA(Arg) + L-arginine + ATP = L-arginyl-tRNA(Arg) + AMP + diphosphate. The chain is Arginine--tRNA ligase from Streptococcus thermophilus (strain ATCC BAA-250 / LMG 18311).